The following is an 876-amino-acid chain: Dynein regulatory complex subunit 7 (876 aa).

Coiled-coil stretches lie at residues 1–33 and 258–295; these read MEVL…ERVT and KFEQ…AKPD. The segment at 1-40 is disordered; the sequence is MEVLREKVEEEEEAEREEAAERAERTEKLERVTKSAEVSR. Positions 17 to 40 are enriched in basic and acidic residues; that stretch reads EEAAERAERTEKLERVTKSAEVSR. Positions 385 to 412 are disordered; that stretch reads SLTEEDEEGLDDDDDDVEDLGKEEEDKS. The span at 387-407 shows a compositional bias: acidic residues; sequence TEEDEEGLDDDDDDVEDLGKE. 2 coiled-coil regions span residues 679-710 and 784-809; these read QLKN…EEEE and QRLI…KKQQ.

The protein belongs to the DRC7 family. In terms of assembly, component of the nexin-dynein regulatory complex (N-DRC). Interacts with TCTE1/DRC5. Interacts with DRC3 and GAS8/DRC4. Expressed in diplotene and pachytene spermytocytes, and in round and elongating spermatids (at protein level). Strongly expressed in spleen and testis, faintly expressed in kidney, ovary and thymus. As to expression, abundantly expressed in the testis and is weakly expressed in the brain, thymus, lung and ovary. Expressed in ciliated cells.

The protein localises to the cell projection. The protein resides in the cilium. It localises to the flagellum. It is found in the cytoplasm. Its subcellular location is the cytoskeleton. The protein localises to the cilium axoneme. The protein resides in the flagellum axoneme. Its function is as follows. Component of the nexin-dynein regulatory complex (N-DRC) a key regulator of ciliary/flagellar motility which maintains the alignment and integrity of the distal axoneme and regulates microtubule sliding in motile axonemes. Essential for male fertility, sperm head morphogenesis and sperm flagellum formation. Not required for ciliogenesis in the brain and trachea. The polypeptide is Dynein regulatory complex subunit 7 (Drc7) (Mus musculus (Mouse)).